The sequence spans 197 residues: Probable GTP-binding protein EngB (197 aa).

One can recognise an EngB-type G domain in the interval 24-197 (DIPEIALAGR…WDAILEKVNK (174 aa)). GTP contacts are provided by residues 32-39 (GRSNVGKS), 59-63 (GKTQL), 77-80 (DVPG), 144-147 (TKAD), and 176-178 (FSS). Residues Ser-39 and Thr-61 each contribute to the Mg(2+) site.

The protein belongs to the TRAFAC class TrmE-Era-EngA-EngB-Septin-like GTPase superfamily. EngB GTPase family. Mg(2+) serves as cofactor.

Its function is as follows. Necessary for normal cell division and for the maintenance of normal septation. This is Probable GTP-binding protein EngB from Streptococcus gordonii (strain Challis / ATCC 35105 / BCRC 15272 / CH1 / DL1 / V288).